Here is a 185-residue protein sequence, read N- to C-terminus: Methanol dehydrogenase activator (185 aa).

It belongs to the Nudix hydrolase family. Homodimer. The cofactor is Mg(2+).

In terms of biological role, involved in the activation of the NAD-dependent methanol dehydrogenase (MDH). MDH activation by Act involves hydrolytic removal of the nicotinamide mononucleotide (NMN) moiety of the NAD cofactor, changing its ping-pong type of reaction mechanism into a ternary complex reaction mechanism. It requires the presence of magnesium ions and is also able to use ADP-ribose. In Bacillus methanolicus, this protein is Methanol dehydrogenase activator.